Here is a 331-residue protein sequence, read N- to C-terminus: PIN2/TERF1-interacting telomerase inhibitor 1 (331 aa).

Disordered regions lie at residues 1 to 28 (MSMLAERRRKQKWAVDPRNTAWSNDDSK), 156 to 175 (AQDGCSNSTADEADTSLTTT), and 197 to 331 (SKSQ…KVSR). The 47-residue stretch at 26–72 (DSKFGQKMLEKMGWSKGKGLGAQEQGATEHIKVKVKNNHLGLGATNN) folds into the G-patch domain. A Phosphoserine modification is found at S233. Positions 236–246 (HKAKRHKKKKR) are enriched in basic residues. The segment covering 247–261 (VEAERGPAAKKRDQV) has biased composition (basic and acidic residues). A telomerase inhibitory domain (TID) region spans residues 254 to 328 (AAKKRDQVEL…DSAPVKKKKK (75 aa)). 3 positions are modified to phosphoserine: S269, S274, and S277. The short motif at 291-301 (QDDVPKPRKRR) is the TBM element. Positions 297-306 (PRKRRAKKTL) are enriched in basic residues.

This sequence belongs to the PINX1 family. Interacts with MCRS1, TERT, TERF1, NCL/nucleolin, and the telomerase RNA.

It localises to the nucleus. It is found in the nucleolus. Its subcellular location is the chromosome. The protein resides in the telomere. The protein localises to the centromere. It localises to the kinetochore. Microtubule-binding protein essential for faithful chromosome segregation. Mediates TRF1 and TERT accumulation in nucleolus and enhances TRF1 binding to telomeres. Inhibits telomerase activity. May inhibit cell proliferation and act as tumor suppressor. In Rattus norvegicus (Rat), this protein is PIN2/TERF1-interacting telomerase inhibitor 1.